Here is a 311-residue protein sequence, read N- to C-terminus: Porphobilinogen deaminase (311 aa).

C242 carries the post-translational modification S-(dipyrrolylmethanemethyl)cysteine.

The protein belongs to the HMBS family. As to quaternary structure, monomer. Dipyrromethane is required as a cofactor.

The enzyme catalyses 4 porphobilinogen + H2O = hydroxymethylbilane + 4 NH4(+). It participates in porphyrin-containing compound metabolism; protoporphyrin-IX biosynthesis; coproporphyrinogen-III from 5-aminolevulinate: step 2/4. In terms of biological role, tetrapolymerization of the monopyrrole PBG into the hydroxymethylbilane pre-uroporphyrinogen in several discrete steps. This is Porphobilinogen deaminase from Baumannia cicadellinicola subsp. Homalodisca coagulata.